Reading from the N-terminus, the 513-residue chain is MKTVVVLDYGSQYTQLIVRRVREKGYYAELLPWDAKEEEVKRLNPTAIILSGGPSSVYEKDAPFVPEYVLHLNIPILGICYGLQALVHKFGGRVEKSQKREFGHAILEVEEDPLFEGLPKKFDVWMSHSDRVEKLPEGFYVIGRSENSPFAAIRNKNETIYGVQFHPEVTHTQFGSKILENFVSKIAKMEKNWEMKDFVSEKIKEIKGIVGNDKVILGLSGGVDSSVVAMLLHKAIGDNLVPVFVDTGLLRLNEGEEVKENFERLGIKIFVVDAKKRFLDALKDVEDPEEKRKIIGHTFIDVFYETSMQLLEEFGNIKYLAQGTLYPDIIESKVSERKSAAKIKTHHNVGGLPEKLPFKIIEPLRYLFKDEVRKIGEILELPQSMINRHPFPGPGLAVRIIGKVTEEAISILQKADYIFIEELKKNNLYDKVWQAFAVFLPIKSVGVMGDYRTYENVIALRAVNSFDGMTADWSKLPHEFLNKVAKRIINEVKGVNRVVYDITSKPPATIEWE.

One can recognise a Glutamine amidotransferase type-1 domain in the interval 3–192; it reads TVVVLDYGSQ…VSKIAKMEKN (190 aa). C80 (nucleophile) is an active-site residue. Active-site residues include H166 and E168. Residues 193–388 enclose the GMPS ATP-PPase domain; it reads WEMKDFVSEK…LELPQSMINR (196 aa). 220 to 226 is an ATP binding site; the sequence is SGGVDSS.

Homodimer.

It carries out the reaction XMP + L-glutamine + ATP + H2O = GMP + L-glutamate + AMP + diphosphate + 2 H(+). It participates in purine metabolism; GMP biosynthesis; GMP from XMP (L-Gln route): step 1/1. Its function is as follows. Catalyzes the synthesis of GMP from XMP. The polypeptide is GMP synthase [glutamine-hydrolyzing] (Thermosipho melanesiensis (strain DSM 12029 / CIP 104789 / BI429)).